The sequence spans 1374 residues: DNA-directed RNA polymerase subunit beta (1374 aa).

The protein belongs to the RNA polymerase beta chain family. As to quaternary structure, the RNAP catalytic core consists of 2 alpha, 1 beta, 1 beta' and 1 omega subunit. When a sigma factor is associated with the core the holoenzyme is formed, which can initiate transcription.

The enzyme catalyses RNA(n) + a ribonucleoside 5'-triphosphate = RNA(n+1) + diphosphate. In terms of biological role, DNA-dependent RNA polymerase catalyzes the transcription of DNA into RNA using the four ribonucleoside triphosphates as substrates. The sequence is that of DNA-directed RNA polymerase subunit beta from Methylobacterium nodulans (strain LMG 21967 / CNCM I-2342 / ORS 2060).